A 250-amino-acid chain; its full sequence is MLLLISPDGVEEALACATAAEHLDIVDVKKPDEGSLGANFPWVIREIRAAVPADKPVSATVGDVPYKPGTVAQAALGAAVSGATYIKVGLYGCATPDQAIDVMRGVVRAVKDFRADAFVVASGYADAHRIGCVNPLALPDIARRAGADAAMLDTAIKDGTRLFDHVPPEGCAEFVRLAHEAGLLAALAGSVKAADLATLTRIGTDIVGVRGAVCEGGDRDAGRIQPRLVAAFRAEMDRHARAFAAAPAAS.

Lysine 29 (schiff-base intermediate with substrate) is an active-site residue. The active-site Proton acceptor is lysine 87.

Belongs to the MfnB family.

The enzyme catalyses 2 D-glyceraldehyde 3-phosphate = 4-(hydroxymethyl)-2-furancarboxaldehyde phosphate + phosphate + 2 H2O. Its function is as follows. Catalyzes the formation of 4-(hydroxymethyl)-2-furancarboxaldehyde phosphate (4-HFC-P) from two molecules of glyceraldehyde-3-P (GA-3-P). This chain is Putative (5-formylfuran-3-yl)methyl phosphate synthase, found in Streptomyces griseus subsp. griseus (strain JCM 4626 / CBS 651.72 / NBRC 13350 / KCC S-0626 / ISP 5235).